The sequence spans 327 residues: MTITTINIPSLTPHPCVEYWSVCKVEALFETPFLELVYQAAQVHRKHFNPQTIQLSTLMSIKTGGCPEDCSYCPQSARYHTGVQNQQLLCVEEIVEKAKIAKSRGAGRFCMGAAWRGPKPKDIGKITEIIKAVKDLGLETCGTFGLLQDGMAEELKEAGLDYYNHNIDTAPEHYKEIIGTRDFDDRLNTLGKIRKAGLKVCCGGIVGMNETRKERAGLIASLANLDPQPESVPINQLVKVEGTPLADAQELDWTEFVRTIAVARITMPKSYVRLSAGRQGMSEEMQAMCFMAGANSIFYGDKLLVTVNPEEDGDQLLMAKLDLKPET.

Residues 51-278 (QTIQLSTLMS…KSYVRLSAGR (228 aa)) form the Radical SAM core domain. 3 residues coordinate [4Fe-4S] cluster: cysteine 66, cysteine 70, and cysteine 73. Residues cysteine 110, cysteine 141, cysteine 201, and arginine 273 each contribute to the [2Fe-2S] cluster site.

The protein belongs to the radical SAM superfamily. Biotin synthase family. As to quaternary structure, homodimer. The cofactor is [4Fe-4S] cluster. [2Fe-2S] cluster serves as cofactor.

The enzyme catalyses (4R,5S)-dethiobiotin + (sulfur carrier)-SH + 2 reduced [2Fe-2S]-[ferredoxin] + 2 S-adenosyl-L-methionine = (sulfur carrier)-H + biotin + 2 5'-deoxyadenosine + 2 L-methionine + 2 oxidized [2Fe-2S]-[ferredoxin]. It functions in the pathway cofactor biosynthesis; biotin biosynthesis; biotin from 7,8-diaminononanoate: step 2/2. In terms of biological role, catalyzes the conversion of dethiobiotin (DTB) to biotin by the insertion of a sulfur atom into dethiobiotin via a radical-based mechanism. The sequence is that of Biotin synthase from Histophilus somni (strain 2336) (Haemophilus somnus).